Consider the following 549-residue polypeptide: Glucose-6-phosphate isomerase (549 aa).

The active-site Proton donor is the glutamate 355. Active-site residues include histidine 387 and lysine 515.

It belongs to the GPI family.

It localises to the cytoplasm. It catalyses the reaction alpha-D-glucose 6-phosphate = beta-D-fructose 6-phosphate. It participates in carbohydrate biosynthesis; gluconeogenesis. The protein operates within carbohydrate degradation; glycolysis; D-glyceraldehyde 3-phosphate and glycerone phosphate from D-glucose: step 2/4. In terms of biological role, catalyzes the reversible isomerization of glucose-6-phosphate to fructose-6-phosphate. The polypeptide is Glucose-6-phosphate isomerase (Haemophilus influenzae (strain PittGG)).